Here is a 761-residue protein sequence, read N- to C-terminus: Phosphoribosylformylglycinamidine synthase subunit PurL (761 aa).

The active site involves His49. Residues Tyr52 and Lys92 each coordinate ATP. Residue Glu94 coordinates Mg(2+). Substrate-binding positions include 95 to 98 (SHNH) and Arg117. His96 acts as the Proton acceptor in catalysis. Asp118 lines the Mg(2+) pocket. A substrate-binding site is contributed by Gln241. Mg(2+) is bound at residue Asp269. Position 318–320 (318–320 (ESQ)) interacts with substrate. The ATP site is built by Asn502 and Gly539. Position 540 (Asn540) interacts with Mg(2+). Ser542 lines the substrate pocket.

This sequence belongs to the FGAMS family. Monomer. Part of the FGAM synthase complex composed of 1 PurL, 1 PurQ and 2 PurS subunits.

It localises to the cytoplasm. The catalysed reaction is N(2)-formyl-N(1)-(5-phospho-beta-D-ribosyl)glycinamide + L-glutamine + ATP + H2O = 2-formamido-N(1)-(5-O-phospho-beta-D-ribosyl)acetamidine + L-glutamate + ADP + phosphate + H(+). The protein operates within purine metabolism; IMP biosynthesis via de novo pathway; 5-amino-1-(5-phospho-D-ribosyl)imidazole from N(2)-formyl-N(1)-(5-phospho-D-ribosyl)glycinamide: step 1/2. Functionally, part of the phosphoribosylformylglycinamidine synthase complex involved in the purines biosynthetic pathway. Catalyzes the ATP-dependent conversion of formylglycinamide ribonucleotide (FGAR) and glutamine to yield formylglycinamidine ribonucleotide (FGAM) and glutamate. The FGAM synthase complex is composed of three subunits. PurQ produces an ammonia molecule by converting glutamine to glutamate. PurL transfers the ammonia molecule to FGAR to form FGAM in an ATP-dependent manner. PurS interacts with PurQ and PurL and is thought to assist in the transfer of the ammonia molecule from PurQ to PurL. This is Phosphoribosylformylglycinamidine synthase subunit PurL from Chlorobium luteolum (strain DSM 273 / BCRC 81028 / 2530) (Pelodictyon luteolum).